The sequence spans 296 residues: Putative S-adenosyl-L-methionine-dependent methyltransferase MAV_4764 (296 aa).

S-adenosyl-L-methionine is bound by residues Asp-121 and 150–151 (DL).

Belongs to the UPF0677 family.

Its function is as follows. Exhibits S-adenosyl-L-methionine-dependent methyltransferase activity. The chain is Putative S-adenosyl-L-methionine-dependent methyltransferase MAV_4764 from Mycobacterium avium (strain 104).